The following is a 538-amino-acid chain: Nectin-2 (538 aa).

Residues 1 to 31 (MARAAALLPSRSPPTPLLWPLLLLLLLETGA) form the signal peptide. One can recognise an Ig-like V-type domain in the interval 32-156 (QDVRVQVLPE…KGSVRGMTWL (125 aa)). Topologically, residues 32-360 (QDVRVQVLPE…NTAGAGATGG (329 aa)) are extracellular. 3 disulfide bridges follow: cysteine 54–cysteine 140, cysteine 183–cysteine 238, and cysteine 283–cysteine 329. N-linked (GlcNAc...) asparagine glycosylation is present at asparagine 137. Ig-like C2-type domains follow at residues 162–256 (PKNQ…VTLS) and 261–345 (PEVS…QVIF). N-linked (GlcNAc...) asparagine glycosylation occurs at asparagine 324. The chain crosses the membrane as a helical span at residues 361-381 (IIGGIIAAIIATAVAATGILI). Residues 382–538 (CRQQRKEQTL…GFVMSRAMYV (157 aa)) are Cytoplasmic-facing. Residues 390–414 (TLQGAEEDEDLEGPPSYKPPTPKAK) form a disordered region. Threonine 410 carries the post-translational modification Phosphothreonine. Phosphoserine occurs at positions 433, 465, and 470. The disordered stretch occupies residues 462–489 (ERSGPLHPGATSLGSPIPVPPGPPAVED).

The protein belongs to the nectin family. Can form trans-heterodimers with NECTIN3. Interacts with CD226 or with PVRIG; these interactions are competitive and have a differential functional outcome on T-cell activation, either positive or negative, respectively. Binds with low affinity to TIGIT. As to quaternary structure, (Microbial infection) Interacts with herpes simplex virus 1 (HHV-1) mutant Rid1, herpes simplex virus 1 (HHV-2) and pseudorabies virus (PRV) envelope glycoprotein D. Ubiquitous.

It localises to the cell membrane. Modulator of T-cell signaling. Can be either a costimulator of T-cell function, or a coinhibitor, depending on the receptor it binds to. Upon binding to CD226, stimulates T-cell proliferation and cytokine production, including that of IL2, IL5, IL10, IL13, and IFNG. Upon interaction with PVRIG, inhibits T-cell proliferation. These interactions are competitive. Probable cell adhesion protein. Functionally, (Microbial infection) Acts as a receptor for herpes simplex virus 1 (HHV-1) mutant Rid1, herpes simplex virus 1 (HHV-2) and pseudorabies virus (PRV). The protein is Nectin-2 of Homo sapiens (Human).